A 960-amino-acid chain; its full sequence is Dynamin-like GTPase OPA1, mitochondrial (960 aa).

The transit peptide at 1–87 (MWRLRRAAVA…IKYGYQPRRN (87 aa)) directs the protein to the mitochondrion. The Mitochondrial matrix portion of the chain corresponds to 88–96 (FWPARLATR). A helical membrane pass occupies residues 97–113 (LLKLRYLILGSAVGGGY). Residues 114-770 (TAKKTFDQWK…NAIENMVGPD (657 aa)) lie on the Mitochondrial intermembrane side of the membrane. Positions 210–254 (SDKEKIDQLQEELLHTQLKYQRILERLEKENKELRKLVLQKDDKG) form a coiled coil. K228 carries the N6-acetyllysine modification. In terms of domain architecture, Dynamin-type G spans 285–561 (QDHLPRVVVV…FWKMVRESVE (277 aa)). Positions 295–302 (GDQSAGKT) are G1 motif. 6 residues coordinate GTP: S298, G300, K301, T302, S303, and G317. T302 is a Mg(2+) binding site. A G2 motif region spans residues 321 to 324 (MMTR). Residues T323 and D398 each contribute to the Mg(2+) site. The G3 motif stretch occupies residues 398–401 (DLPG). A G4 motif region spans residues 467–470 (TKVD). GTP-binding residues include K468, D470, and T503. The interval 501–504 (VVTG) is G5 motif. Stalk region regions lie at residues 589–836 (DRNE…IKDT) and 874–928 (CNDV…IKLL). Residues 736–856 (SDKQQWDAAI…KTALNHCNLC (121 aa)) form a paddle region region. Residues 771-781 (WKKRWLYWKNR) lie within the membrane without spanning it. The Mitochondrial intermembrane segment spans residues 782–960 (TQEQCVHNET…AFIEALHQEK (179 aa)). A disulfide bridge links C856 with C874. Positions 895-960 (RQQLTNTEVR…AFIEALHQEK (66 aa)) form a coiled coil.

The protein belongs to the TRAFAC class dynamin-like GTPase superfamily. Dynamin/Fzo/YdjA family. As to quaternary structure, oligomeric complex consisting of membrane-bound and soluble forms of OPA1. Interacts with RCC1L; RCC1L acts as a guanine nucleotide exchange factor (GEF) for OPA1 by exchanging bound GDP for free GTP. Interacts with CHCHD3 and IMMT; these interactions occur preferentially with soluble OPA1 forms. Interacts with PRELID1. In terms of processing, cleaved by OMA1 or YME1L downstream of the transmembrane region in response to different signals to generate soluble forms. Cleaved by OMA1 at position S1 following stress conditions, generating the short soluble form (Dynamin-like GTPase OPA1, short form; S-OPA1). AFG3L2 is involved in the regulation of OMA1-dependent processing of OPA1. PARL-dependent proteolytic processing releases an antiapoptotic soluble form not required for mitochondrial fusion.

The protein resides in the mitochondrion inner membrane. It is found in the mitochondrion intermembrane space. The catalysed reaction is GTP + H2O = GDP + phosphate + H(+). Its activity is regulated as follows. Activated by guanine nucleotide exchange factor RCC1L. In terms of biological role, dynamin-related GTPase that is essential for normal mitochondrial morphology by mediating fusion of the mitochondrial inner membranes, regulating cristae morphology and maintaining respiratory chain function. Exists in two forms: the transmembrane, long form (Dynamin-like GTPase OPA1, long form; L-OPA1), which is tethered to the inner mitochondrial membrane, and the short soluble form (Dynamin-like GTPase OPA1, short form; S-OPA1), which results from proteolytic cleavage and localizes in the intermembrane space. Both forms (L-OPA1 and S-OPA1) cooperate to catalyze the fusion of the mitochondrial inner membrane. The equilibrium between L-OPA1 and S-OPA1 is essential: excess levels of S-OPA1, produced by cleavage by OMA1 following loss of mitochondrial membrane potential, lead to an impaired equilibrium between L-OPA1 and S-OPA1, inhibiting mitochondrial fusion. The balance between L-OPA1 and S-OPA1 also influences cristae shape and morphology. Involved in remodeling cristae and the release of cytochrome c during apoptosis. Proteolytic processing by PARL in response to intrinsic apoptotic signals may lead to disassembly of OPA1 oligomers and release of the caspase activator cytochrome C (CYCS) into the mitochondrial intermembrane space. Acts as a regulator of T-helper Th17 cells, which are characterized by cells with fused mitochondria with tight cristae, by mediating mitochondrial membrane remodeling: OPA1 is required for interleukin-17 (IL-17) production. Its role in mitochondrial morphology is required for mitochondrial genome maintenance. Constitutes the transmembrane long form (L-OPA1) that plays a central role in mitochondrial inner membrane fusion and cristae morphology. L-OPA1 and the soluble short form (S-OPA1) form higher-order helical assemblies that coordinate the fusion of mitochondrial inner membranes. Inner membrane-anchored L-OPA1 molecules initiate membrane remodeling by recruiting soluble S-OPA1 to rapidly polymerize into a flexible cylindrical scaffold encaging the mitochondrial inner membrane. Once at the membrane surface, the formation of S-OPA1 helices induce bilayer curvature. OPA1 dimerization through the paddle region, which inserts into cardiolipin-containing membrane, promotes GTP hydrolysis and the helical assembly of a flexible OPA1 lattice on the membrane, which drives membrane curvature and mitochondrial fusion. Plays a role in the maintenance and remodeling of mitochondrial cristae, some invaginations of the mitochondrial inner membrane that provide an increase in the surface area. Probably acts by forming helical filaments at the inside of inner membrane tubes with the shape and dimensions of crista junctions. The equilibrium between L-OPA1 and S-OPA1 influences cristae shape and morphology: increased L-OPA1 levels promote cristae stacking and elongated mitochondria, while increased S-OPA1 levels correlated with irregular cristae packing and round mitochondria shape. Its function is as follows. Constitutes the soluble short form (S-OPA1) generated by cleavage by OMA1, which plays a central role in mitochondrial inner membrane fusion and cristae morphology. The transmembrane long form (L-OPA1) and the S-OPA1 form higher-order helical assemblies that coordinate the fusion of mitochondrial inner membranes. Inner membrane-anchored L-OPA1 molecules initiate membrane remodeling by recruiting soluble S-OPA1 to rapidly polymerize into a flexible cylindrical scaffold encaging the mitochondrial inner membrane. Once at the membrane surface, the formation of S-OPA1 helices induce bilayer curvature. OPA1 dimerization through the paddle region, which inserts into cardiolipin-containing membrane, promotes GTP hydrolysis and the helical assembly of a flexible OPA1 lattice on the membrane, which drives membrane curvature and mitochondrial fusion. Excess levels of S-OPA1 produced by cleavage by OMA1 following stress conditions that induce loss of mitochondrial membrane potential, lead to an impaired equilibrium between L-OPA1 and S-OPA1, thereby inhibiting mitochondrial fusion. Involved in mitochondrial safeguard in response to transient mitochondrial membrane depolarization by mediating flickering: cleavage by OMA1 leads to excess production of S-OPA1, preventing mitochondrial hyperfusion. Plays a role in the maintenance and remodeling of mitochondrial cristae, some invaginations of the mitochondrial inner membrane that provide an increase in the surface area. Probably acts by forming helical filaments at the inside of inner membrane tubes with the shape and dimensions of crista junctions. The equilibrium between L-OPA1 and S-OPA1 influences cristae shape and morphology: increased L-OPA1 levels promote cristae stacking and elongated mitochondria, while increased S-OPA1 levels correlated with irregular cristae packing and round mitochondria shape. This chain is Dynamin-like GTPase OPA1, mitochondrial, found in Pongo abelii (Sumatran orangutan).